The following is a 98-amino-acid chain: NADH-ubiquinone oxidoreductase chain 4L (98 aa).

Transmembrane regions (helical) follow at residues 1-21 (MSLVYMNIMTAFMVSLAGLLM), 29-49 (SLLCLEGMMLSLFVMATLTIL), and 61-81 (IILLVFAACEAALGLSLLVMV).

It belongs to the complex I subunit 4L family. In terms of assembly, core subunit of respiratory chain NADH dehydrogenase (Complex I) which is composed of 45 different subunits.

Its subcellular location is the mitochondrion inner membrane. The catalysed reaction is a ubiquinone + NADH + 5 H(+)(in) = a ubiquinol + NAD(+) + 4 H(+)(out). In terms of biological role, core subunit of the mitochondrial membrane respiratory chain NADH dehydrogenase (Complex I) which catalyzes electron transfer from NADH through the respiratory chain, using ubiquinone as an electron acceptor. Part of the enzyme membrane arm which is embedded in the lipid bilayer and involved in proton translocation. This chain is NADH-ubiquinone oxidoreductase chain 4L (MT-ND4L), found in Rangifer tarandus (Reindeer).